The chain runs to 297 residues: uncharacterized protein (297 aa).

Disordered stretches follow at residues 1-20, 39-100, and 174-297; these read MDTL…NADV, IEKD…ENLG, and VQKA…NEDQ. The region spanning 101-179 is the RRM domain; the sequence is NDLFVSGIAS…RVLNVQKAKR (79 aa). A Phosphoserine modification is found at S184. Composition is skewed to basic and acidic residues over residues 209–223 and 233–253; these read GGYR…DSNR and PQRE…DSRP. Over residues 254–263 the composition is skewed to basic residues; the sequence is RRERHFHGRS. Residues 287 to 297 show a composition bias toward polar residues; sequence SHSSVPPNEDQ.

It localises to the nucleus. This is an uncharacterized protein from Schizosaccharomyces pombe (strain 972 / ATCC 24843) (Fission yeast).